A 1755-amino-acid chain; its full sequence is Transposon Ty1-GR1 Gag-Pol polyprotein (1755 aa).

A compositionally biased stretch (low complexity) spans 1-16; the sequence is MESQQLSQHSHISHGS. Disordered regions lie at residues 1-93, 126-173, and 352-421; these read MESQ…MMTQ, PQSQ…RPPP, and GSRN…SKST. Polar residues-rich tracts occupy residues 48 to 60, 71 to 93, and 127 to 152; these read TKAN…TPAS, SPQT…MMTQ, and QSQF…GNTF. The span at 153 to 165 shows a compositional bias: low complexity; that stretch reads TDSSSADSDMTST. The segment at 299–401 is RNA-binding; the sequence is NNGIHINNKV…NSKSKTARAH (103 aa). Positions 402-418 are enriched in low complexity; the sequence is NVSTSNNSPSTDNDSIS. A Phosphoserine modification is found at Ser416. The active-site For protease activity; shared with dimeric partner is the Asp461. Residues 583–640 form an integrase-type zinc finger-like region; the sequence is NVHTSESTRKYPYPFIHRMLAHANAQTIRYSLKNNTITYFNESDVDWSSAIDYQCPDC. The 176-residue stretch at 660-835 folds into the Integrase catalytic domain; that stretch reads NSYEPFQYLH…AGLDISTLLP (176 aa). Mg(2+) contacts are provided by Asp671 and Asp736. Disordered stretches follow at residues 956-1087, 1092-1111, and 1130-1187; these read SKAV…ETEK, RSPS…NIVP, and DLPL…DNET. The segment covering 960–969 has biased composition (low complexity); that stretch reads SPTDSTPPST. Over residues 1005–1015 the composition is skewed to polar residues; it reads STPQISNIEST. The span at 1038-1053 shows a compositional bias: basic and acidic residues; it reads ESSHASKSKDFRHSDS. Composition is skewed to polar residues over residues 1054–1082 and 1101–1111; these read YSEN…QISD and PENNSSHNIVP. The short motif at 1178–1212 is the Bipartite nuclear localization signal element; the sequence is KKRSLEDNETEIKVSRDTWNTKNMRSLEPPRSKKR. Residues 1338-1476 enclose the Reverse transcriptase Ty1/copia-type domain; it reads NNYYITQLDI…DILGLEIKYQ (139 aa). Asp1346, Asp1427, Asp1428, Asp1610, Glu1652, and Asp1685 together coordinate Mg(2+). An RNase H Ty1/copia-type domain is found at 1610 to 1752; it reads DASYGNQPYY…IKTFKLLTNK (143 aa).

In terms of assembly, the capsid protein forms a homotrimer, from which the VLPs are assembled. The protease is a homodimer, whose active site consists of two apposed aspartic acid residues. Post-translationally, initially, virus-like particles (VLPs) are composed of the structural unprocessed proteins Gag and Gag-Pol, and also contain the host initiator methionine tRNA (tRNA(i)-Met) which serves as a primer for minus-strand DNA synthesis, and a dimer of genomic Ty RNA. Processing of the polyproteins occurs within the particle and proceeds by an ordered pathway, called maturation. First, the protease (PR) is released by autocatalytic cleavage of the Gag-Pol polyprotein yielding capsid protein p45 and a Pol-p154 precursor protein. This cleavage is a prerequisite for subsequent processing of Pol-p154 at the remaining sites to release the mature structural and catalytic proteins. Maturation takes place prior to the RT reaction and is required to produce transposition-competent VLPs.

The protein localises to the cytoplasm. It is found in the nucleus. The enzyme catalyses DNA(n) + a 2'-deoxyribonucleoside 5'-triphosphate = DNA(n+1) + diphosphate. It catalyses the reaction Endonucleolytic cleavage to 5'-phosphomonoester.. Functionally, capsid protein (CA) is the structural component of the virus-like particle (VLP), forming the shell that encapsulates the retrotransposons dimeric RNA genome. The particles are assembled from trimer-clustered units and there are holes in the capsid shells that allow for the diffusion of macromolecules. CA also has nucleocapsid-like chaperone activity, promoting primer tRNA(i)-Met annealing to the multipartite primer-binding site (PBS), dimerization of Ty1 RNA and initiation of reverse transcription. Its function is as follows. The aspartyl protease (PR) mediates the proteolytic cleavages of the Gag and Gag-Pol polyproteins after assembly of the VLP. In terms of biological role, reverse transcriptase/ribonuclease H (RT) is a multifunctional enzyme that catalyzes the conversion of the retro-elements RNA genome into dsDNA within the VLP. The enzyme displays a DNA polymerase activity that can copy either DNA or RNA templates, and a ribonuclease H (RNase H) activity that cleaves the RNA strand of RNA-DNA heteroduplexes during plus-strand synthesis and hydrolyzes RNA primers. The conversion leads to a linear dsDNA copy of the retrotransposon that includes long terminal repeats (LTRs) at both ends. Integrase (IN) targets the VLP to the nucleus, where a subparticle preintegration complex (PIC) containing at least integrase and the newly synthesized dsDNA copy of the retrotransposon must transit the nuclear membrane. Once in the nucleus, integrase performs the integration of the dsDNA into the host genome. In Saccharomyces cerevisiae (strain ATCC 204508 / S288c) (Baker's yeast), this protein is Transposon Ty1-GR1 Gag-Pol polyprotein (TY1B-GR1).